The following is a 733-amino-acid chain: uncharacterized protein (733 aa).

A helical membrane pass occupies residues 174-194 (WAVMILASLRPELFGPIIIAG).

The protein resides in the membrane. This is an uncharacterized protein from Rhizobium meliloti (Ensifer meliloti).